We begin with the raw amino-acid sequence, 113 residues long: Protein Wnt-10 (113 aa).

Serine 1 carries O-palmitoleoyl serine; by PORCN lipidation. A disulfide bond links cysteine 79 and cysteine 94.

Belongs to the Wnt family. Post-translationally, palmitoleoylation is required for efficient binding to frizzled receptors. Depalmitoleoylation leads to Wnt signaling pathway inhibition.

The protein resides in the secreted. It localises to the extracellular space. The protein localises to the extracellular matrix. Functionally, ligand for members of the frizzled family of seven transmembrane receptors. Probable developmental protein. May be a signaling molecule which affects the development of discrete regions of tissues. Is likely to signal over only few cell diameters. This is Protein Wnt-10 (WNT-10) from Eptatretus stoutii (Pacific hagfish).